The chain runs to 118 residues: Non-specific lipid-transfer protein 1 (118 aa).

An N-terminal signal peptide occupies residues 1 to 25 (MAGVMKLACLLLACMIVAGPITSNA). Cystine bridges form between cysteine 29/cysteine 76, cysteine 39/cysteine 53, cysteine 54/cysteine 100, and cysteine 74/cysteine 114.

It belongs to the plant LTP family. In terms of tissue distribution, expressed primarily in epidermal cells.

The protein resides in the secreted. The protein localises to the cell wall. Functionally, plant non-specific lipid-transfer proteins transfer phospholipids as well as galactolipids across membranes. May play a role in wax or cutin deposition in the cell walls of expanding epidermal cells and certain secretory tissues. This chain is Non-specific lipid-transfer protein 1 (LTP1), found in Arabidopsis thaliana (Mouse-ear cress).